Consider the following 116-residue polypeptide: Small ribosomal subunit protein uS10m (116 aa).

The protein belongs to the universal ribosomal protein uS10 family.

Its subcellular location is the mitochondrion. This is Small ribosomal subunit protein uS10m (RPS10) from Reclinomonas americana.